The following is a 198-amino-acid chain: Sulfite reductase, dissimilatory-type subunit alpha (198 aa).

Residues C45, C64, C67, and C70 each contribute to the [4Fe-4S] cluster site. In terms of domain architecture, 4Fe-4S ferredoxin-type spans 55-83 (GTLSIDNKNCTRCMHCINTMPRALKIGDE).

In terms of assembly, heterohexamer of two alpha, two beta and two gamma subunits.

Part of the complex that catalyzes the reduction of sulfite to sulfide. The alpha and beta subunits may have arisen by gene duplication. They both bind 2 iron-sulfur clusters, but the alpha subunit seems to be catalytically inactive, due to substitutions along the putative substrate access channel, and because it binds sirohydrochlorin (the dematallated form of siroheme) instead of siroheme. This Megalodesulfovibrio gigas (strain ATCC 19364 / DSM 1382 / NCIMB 9332 / VKM B-1759) (Desulfovibrio gigas) protein is Sulfite reductase, dissimilatory-type subunit alpha (dsrA).